A 483-amino-acid polypeptide reads, in one-letter code: V-type proton ATPase subunit H (483 aa).

Ser-59 and Ser-483 each carry phosphoserine.

The protein belongs to the V-ATPase H subunit family. In terms of assembly, V-ATPase is a heteromultimeric enzyme made up of two complexes: the ATP-hydrolytic V1 complex and the proton translocation V0 complex. The V1 complex consists of three catalytic AB heterodimers that form a heterohexamer, three peripheral stalks each consisting of EG heterodimers, one central rotor including subunits D and F, and the regulatory subunits C and H. The proton translocation complex V0 consists of the proton transport subunit a, a ring of proteolipid subunits c9c'', rotary subunit d, subunits e and f, and the accessory subunits ATP6AP1/Ac45 and ATP6AP2/PRR. Interacts with AP2M1.

The protein resides in the cytoplasmic vesicle. It is found in the clathrin-coated vesicle membrane. In terms of biological role, subunit of the V1 complex of vacuolar(H+)-ATPase (V-ATPase), a multisubunit enzyme composed of a peripheral complex (V1) that hydrolyzes ATP and a membrane integral complex (V0) that translocates protons. V-ATPase is responsible for acidifying and maintaining the pH of intracellular compartments and in some cell types, is targeted to the plasma membrane, where it is responsible for acidifying the extracellular environment. Subunit H is essential for V-ATPase activity, but not for the assembly of the complex. Involved in the endocytosis mediated by clathrin-coated pits, required for the formation of endosomes. The protein is V-type proton ATPase subunit H (Atp6v1h) of Mus musculus (Mouse).